The sequence spans 263 residues: Troponin T, fast skeletal muscle isoforms (263 aa).

The span at 1-26 shows a compositional bias: acidic residues; sequence MSDTEEVEHGEEEYEEEAHEAEEVHE. 3 disordered regions span residues 1–66, 107–188, and 243–263; these read MSDT…FDDI, RAER…VLAE, and DQAQ…GRWK. Ser2 carries the N-acetylserine modification. 3 stretches are compositionally biased toward basic and acidic residues: residues 56–66, 107–149, and 177–188; these read PEGEKVDFDDI, RAER…DDLK, and TARETKKKVLAE. A compositionally biased stretch (basic residues) spans 247-263; the sequence is KHSKKAGAKGKVGGRWK.

The protein belongs to the troponin T family.

Troponin T is the tropomyosin-binding subunit of troponin, the thin filament regulatory complex which confers calcium-sensitivity to striated muscle actomyosin ATPase activity. This is Troponin T, fast skeletal muscle isoforms (TNNT3) from Gallus gallus (Chicken).